The primary structure comprises 129 residues: Small ribosomal subunit protein uS11 (129 aa).

The protein belongs to the universal ribosomal protein uS11 family. Part of the 30S ribosomal subunit. Interacts with proteins S7 and S18. Binds to IF-3.

In terms of biological role, located on the platform of the 30S subunit, it bridges several disparate RNA helices of the 16S rRNA. Forms part of the Shine-Dalgarno cleft in the 70S ribosome. This is Small ribosomal subunit protein uS11 from Nitrosomonas eutropha (strain DSM 101675 / C91 / Nm57).